Reading from the N-terminus, the 476-residue chain is Aspartyl/glutamyl-tRNA(Asn/Gln) amidotransferase subunit B (476 aa).

The protein belongs to the GatB/GatE family. GatB subfamily. As to quaternary structure, heterotrimer of A, B and C subunits.

It catalyses the reaction L-glutamyl-tRNA(Gln) + L-glutamine + ATP + H2O = L-glutaminyl-tRNA(Gln) + L-glutamate + ADP + phosphate + H(+). The enzyme catalyses L-aspartyl-tRNA(Asn) + L-glutamine + ATP + H2O = L-asparaginyl-tRNA(Asn) + L-glutamate + ADP + phosphate + 2 H(+). Functionally, allows the formation of correctly charged Asn-tRNA(Asn) or Gln-tRNA(Gln) through the transamidation of misacylated Asp-tRNA(Asn) or Glu-tRNA(Gln) in organisms which lack either or both of asparaginyl-tRNA or glutaminyl-tRNA synthetases. The reaction takes place in the presence of glutamine and ATP through an activated phospho-Asp-tRNA(Asn) or phospho-Glu-tRNA(Gln). This Clostridium botulinum (strain ATCC 19397 / Type A) protein is Aspartyl/glutamyl-tRNA(Asn/Gln) amidotransferase subunit B.